The chain runs to 225 residues: Small ribosomal subunit protein uS3 (225 aa).

Residues 38-106 enclose the KH type-2 domain; it reads LRAHLRRKLS…DVALNIVEIR (69 aa).

This sequence belongs to the universal ribosomal protein uS3 family. As to quaternary structure, part of the 30S ribosomal subunit. Forms a tight complex with proteins S10 and S14.

Functionally, binds the lower part of the 30S subunit head. Binds mRNA in the 70S ribosome, positioning it for translation. The protein is Small ribosomal subunit protein uS3 of Gluconacetobacter diazotrophicus (strain ATCC 49037 / DSM 5601 / CCUG 37298 / CIP 103539 / LMG 7603 / PAl5).